The following is a 342-amino-acid chain: UDP-N-acetylglucosamine--N-acetylmuramyl-(pentapeptide) pyrophosphoryl-undecaprenol N-acetylglucosamine transferase (342 aa).

Residues 10–12, asparagine 124, serine 177, and glutamine 275 contribute to the UDP-N-acetyl-alpha-D-glucosamine site; that span reads TGG.

It belongs to the glycosyltransferase 28 family. MurG subfamily.

It is found in the cell inner membrane. The enzyme catalyses di-trans,octa-cis-undecaprenyl diphospho-N-acetyl-alpha-D-muramoyl-L-alanyl-D-glutamyl-meso-2,6-diaminopimeloyl-D-alanyl-D-alanine + UDP-N-acetyl-alpha-D-glucosamine = di-trans,octa-cis-undecaprenyl diphospho-[N-acetyl-alpha-D-glucosaminyl-(1-&gt;4)]-N-acetyl-alpha-D-muramoyl-L-alanyl-D-glutamyl-meso-2,6-diaminopimeloyl-D-alanyl-D-alanine + UDP + H(+). Its pathway is cell wall biogenesis; peptidoglycan biosynthesis. Cell wall formation. Catalyzes the transfer of a GlcNAc subunit on undecaprenyl-pyrophosphoryl-MurNAc-pentapeptide (lipid intermediate I) to form undecaprenyl-pyrophosphoryl-MurNAc-(pentapeptide)GlcNAc (lipid intermediate II). This Campylobacter jejuni subsp. doylei (strain ATCC BAA-1458 / RM4099 / 269.97) protein is UDP-N-acetylglucosamine--N-acetylmuramyl-(pentapeptide) pyrophosphoryl-undecaprenol N-acetylglucosamine transferase.